A 581-amino-acid chain; its full sequence is uncharacterized protein (581 aa).

Ser28 carries the phosphoserine modification. The next 11 helical transmembrane spans lie at 61–81, 100–120, 125–145, 187–207, 214–234, 340–360, 382–402, 426–446, 458–478, 486–506, and 522–542; these read LVLICLVSLVTGAIANDAGSA, AGVLFICVGYFTYLAMPATFL, CVYLVCLLFGMLGSMWFALVK, IYILSTSVGTYLGPLAAGYIA, WIGWWGLIISGITFVLFLFTF, IFLFPAVLYSGLQWGAQDAWL, AVAIMNVPCIIGATIGCIYGG, LWLMILPCIINPIGLFMFGIG, VGLGFIGFGWGCAGDISMAYL, VLEAMVGVSVINNTFGYVFTF, and ISIGVLCFIFIATSFPMILCG.

It belongs to the major facilitator superfamily.

The protein resides in the cytoplasm. The protein localises to the cell cortex. It localises to the membrane. This is an uncharacterized protein from Schizosaccharomyces pombe (strain 972 / ATCC 24843) (Fission yeast).